The sequence spans 87 residues: Small ribosomal subunit protein bS20 (87 aa).

Residues 1–26 (MANIKSAKKRAVQSEKARKHNASRRS) form a disordered region.

This sequence belongs to the bacterial ribosomal protein bS20 family.

Functionally, binds directly to 16S ribosomal RNA. This chain is Small ribosomal subunit protein bS20, found in Salmonella typhi.